The primary structure comprises 382 residues: Alkanesulfonate monooxygenase (382 aa).

The protein belongs to the SsuD family.

The catalysed reaction is an alkanesulfonate + FMNH2 + O2 = an aldehyde + FMN + sulfite + H2O + 2 H(+). In terms of biological role, catalyzes the desulfonation of aliphatic sulfonates. The polypeptide is Alkanesulfonate monooxygenase (Pseudomonas entomophila (strain L48)).